Consider the following 310-residue polypeptide: Tagatose-6-phosphate kinase (310 aa).

Belongs to the carbohydrate kinase PfkB family. LacC subfamily.

It carries out the reaction D-tagatofuranose 6-phosphate + ATP = D-tagatofuranose 1,6-bisphosphate + ADP + H(+). The protein operates within carbohydrate metabolism; D-tagatose 6-phosphate degradation; D-glyceraldehyde 3-phosphate and glycerone phosphate from D-tagatose 6-phosphate: step 1/2. The protein is Tagatose-6-phosphate kinase of Staphylococcus aureus (strain Mu3 / ATCC 700698).